Here is a 297-residue protein sequence, read N- to C-terminus: MLRLGSHVSMSGKKMLLGASEEAASYGSNTFMIYTGAPQNTRRKPIEELNIEAGLEHMKAHDMDDIVVHAPYIINIGNSVKPETFELGVNFLQSEIERTRALGAKQIVLHPGAHVGEGADKGIKQIIQGLNEALIHDQDVQIALETMAGKGSECGRTFEELAQIIDGVTHNELLSVTFDTCHTHDAGYDIVNDFDGVLNEFDKIIGIDRLKVLHINDSKNERGAHKDRHANIGFGHIGFDALHYVVHHPQLANVPKILETPYVGEDKASKKAPYKWEIAMLKNGEFDPDLLNKIQNS.

Positions 69, 110, 145, 179, 182, 214, 227, 229, and 259 each coordinate Zn(2+).

This sequence belongs to the AP endonuclease 2 family. The cofactor is Zn(2+).

It carries out the reaction Endonucleolytic cleavage to 5'-phosphooligonucleotide end-products.. Functionally, endonuclease IV plays a role in DNA repair. It cleaves phosphodiester bonds at apurinic or apyrimidinic (AP) sites, generating a 3'-hydroxyl group and a 5'-terminal sugar phosphate. The protein is Probable endonuclease 4 of Listeria welshimeri serovar 6b (strain ATCC 35897 / DSM 20650 / CCUG 15529 / CIP 8149 / NCTC 11857 / SLCC 5334 / V8).